Here is a 71-residue protein sequence, read N- to C-terminus: Pro-MCH (71 aa).

The signal sequence occupies residues 1-20 (AKMSLSSYILILTLVLFSQG).

This sequence belongs to the melanin-concentrating hormone family.

Its subcellular location is the secreted. This is Pro-MCH (PMCH) from Carlito syrichta (Philippine tarsier).